We begin with the raw amino-acid sequence, 124 residues long: Small ribosomal subunit protein uS12 (124 aa).

Aspartate 89 carries the 3-methylthioaspartic acid modification.

The protein belongs to the universal ribosomal protein uS12 family. Part of the 30S ribosomal subunit. Contacts proteins S8 and S17. May interact with IF1 in the 30S initiation complex.

In terms of biological role, with S4 and S5 plays an important role in translational accuracy. Functionally, interacts with and stabilizes bases of the 16S rRNA that are involved in tRNA selection in the A site and with the mRNA backbone. Located at the interface of the 30S and 50S subunits, it traverses the body of the 30S subunit contacting proteins on the other side and probably holding the rRNA structure together. The combined cluster of proteins S8, S12 and S17 appears to hold together the shoulder and platform of the 30S subunit. The sequence is that of Small ribosomal subunit protein uS12 from Klebsiella pneumoniae (strain 342).